A 73-amino-acid chain; its full sequence is MKADIHPAYHTIKVVMTDGTEYETRSTWGSEGAVMNLEIDPKSHPAWTGGNQQLMDRGGRVSKFNKRFGGLGL.

Belongs to the bacterial ribosomal protein bL31 family. Type A subfamily. In terms of assembly, part of the 50S ribosomal subunit.

Functionally, binds the 23S rRNA. This Agrobacterium fabrum (strain C58 / ATCC 33970) (Agrobacterium tumefaciens (strain C58)) protein is Large ribosomal subunit protein bL31.